The chain runs to 277 residues: Formamidopyrimidine-DNA glycosylase (277 aa).

Proline 2 acts as the Schiff-base intermediate with DNA in catalysis. The Proton donor role is filled by glutamate 3. The active-site Proton donor; for beta-elimination activity is the lysine 58. The DNA site is built by histidine 94, arginine 113, and arginine 156. An FPG-type zinc finger spans residues 241 to 277 (LVYGREGVPCPNCGAEHPIQRITQAGRSTFFCPTCQK). The Proton donor; for delta-elimination activity role is filled by arginine 267.

The protein belongs to the FPG family. Monomer. Requires Zn(2+) as cofactor.

It catalyses the reaction Hydrolysis of DNA containing ring-opened 7-methylguanine residues, releasing 2,6-diamino-4-hydroxy-5-(N-methyl)formamidopyrimidine.. The enzyme catalyses 2'-deoxyribonucleotide-(2'-deoxyribose 5'-phosphate)-2'-deoxyribonucleotide-DNA = a 3'-end 2'-deoxyribonucleotide-(2,3-dehydro-2,3-deoxyribose 5'-phosphate)-DNA + a 5'-end 5'-phospho-2'-deoxyribonucleoside-DNA + H(+). In terms of biological role, involved in base excision repair of DNA damaged by oxidation or by mutagenic agents. Acts as a DNA glycosylase that recognizes and removes damaged bases. Has a preference for oxidized purines, such as 7,8-dihydro-8-oxoguanine (8-oxoG). Has AP (apurinic/apyrimidinic) lyase activity and introduces nicks in the DNA strand. Cleaves the DNA backbone by beta-delta elimination to generate a single-strand break at the site of the removed base with both 3'- and 5'-phosphates. The sequence is that of Formamidopyrimidine-DNA glycosylase from Gluconobacter oxydans (strain 621H) (Gluconobacter suboxydans).